A 128-amino-acid chain; its full sequence is Group 2 truncated hemoglobin GlbO (128 aa).

The isodityrosine (Tyr-Tyr) cross-link spans 23 to 36 (YAQVAEDEVLRRVY). Y36 carries the 3',4'-dihydroxyphenylalanine modification. H75 contacts heme.

It belongs to the truncated hemoglobin family. Group II subfamily. As to quaternary structure, homododecamer. Heme is required as a cofactor. In terms of processing, contains L-DOPA (3',4'-dihydroxyphenylalanine).

This is Group 2 truncated hemoglobin GlbO (glbO) from Mycobacterium bovis (strain ATCC BAA-935 / AF2122/97).